Reading from the N-terminus, the 622-residue chain is 1-deoxy-D-xylulose-5-phosphate synthase (622 aa).

Residues H80 and 121–123 (GHS) each bind thiamine diphosphate. D152 is a Mg(2+) binding site. Thiamine diphosphate contacts are provided by residues 153-154 (GA), N181, Y288, and E370. Mg(2+) is bound at residue N181.

It belongs to the transketolase family. DXPS subfamily. Homodimer. The cofactor is Mg(2+). It depends on thiamine diphosphate as a cofactor.

It catalyses the reaction D-glyceraldehyde 3-phosphate + pyruvate + H(+) = 1-deoxy-D-xylulose 5-phosphate + CO2. It participates in metabolic intermediate biosynthesis; 1-deoxy-D-xylulose 5-phosphate biosynthesis; 1-deoxy-D-xylulose 5-phosphate from D-glyceraldehyde 3-phosphate and pyruvate: step 1/1. Its function is as follows. Catalyzes the acyloin condensation reaction between C atoms 2 and 3 of pyruvate and glyceraldehyde 3-phosphate to yield 1-deoxy-D-xylulose-5-phosphate (DXP). This Shewanella oneidensis (strain ATCC 700550 / JCM 31522 / CIP 106686 / LMG 19005 / NCIMB 14063 / MR-1) protein is 1-deoxy-D-xylulose-5-phosphate synthase.